A 447-amino-acid polypeptide reads, in one-letter code: Cytochrome P450 BJ-4 (447 aa).

Cys-392 is a heme binding site.

This sequence belongs to the cytochrome P450 family. Heme serves as cofactor.

In terms of biological role, cytochromes P450 are a group of heme-thiolate monooxygenases. They oxidize a variety of structurally unrelated compounds, including steroids, fatty acids, and xenobiotics. This is Cytochrome P450 BJ-4 (cyp117) from Bradyrhizobium diazoefficiens (strain JCM 10833 / BCRC 13528 / IAM 13628 / NBRC 14792 / USDA 110).